The following is a 1241-amino-acid chain: Nephrin (1241 aa).

The signal sequence occupies residues 1–22 (MALGTTLRASLLLLGLLTEGLA). Topologically, residues 23 to 1055 (QLAIPASVPR…EDQLPTEPPS (1033 aa)) are extracellular. Ig-like C2-type domains follow at residues 27–130 (PASV…VILS), 143–234 (EAGT…SFTV), 242–333 (PPVI…HGIT), 340–434 (PSAI…KSLI), 440–540 (PAQK…TQLA), and 544–635 (PPTN…ETVS). A glycan (N-linked (GlcNAc...) asparagine) is linked at Asn-40. Intrachain disulfides connect Cys-53-Cys-111, Cys-160-Cys-217, and Cys-265-Cys-317. Residues Asn-356 and Asn-401 are each glycosylated (N-linked (GlcNAc...) asparagine). Cys-361 and Cys-417 form a disulfide bridge. Ser-432 carries the post-translational modification Phosphoserine. Cys-465 and Cys-528 are oxidised to a cystine. Residues Asn-547, Asn-553, Asn-564, Asn-577, Asn-680, and Asn-708 are each glycosylated (N-linked (GlcNAc...) asparagine). A disulfide bridge links Cys-567 with Cys-623. Ig-like C2-type domains follow at residues 740-832 (PTIR…LLRL) and 838-939 (PQVE…VSIS). 2 disulfides stabilise this stretch: Cys-761/Cys-816 and Cys-863/Cys-920. Asn-908 carries N-linked (GlcNAc...) asparagine glycosylation. The Fibronectin type-III domain occupies 943–1038 (PPSGLKVVSL…TQLPITTPGL (96 aa)). The segment at 1025–1057 (ADKGTQLPITTPGLHQPSGEPEDQLPTEPPSGP) is disordered. Residues 1056–1076 (GPSGLPLLPVLFALGGLLLLS) traverse the membrane as a helical segment. Residues 1077–1241 (NASCVGGVLW…LPFELRGHLV (165 aa)) are Cytoplasmic-facing. Position 1098 is a phosphoserine (Ser-1098). The span at 1099 to 1114 (EKTEAGSEEDRVRNEY) shows a compositional bias: basic and acidic residues. The interval 1099 to 1137 (EKTEAGSEEDRVRNEYEESQWTGERDTQSSTVSTTEAEP) is disordered. Residue Thr-1101 is modified to Phosphothreonine. Ser-1105 bears the Phosphoserine mark. Positions 1160-1241 (RGFTGEDEDM…LPFELRGHLV (82 aa)) are binds to NPHS2. Tyr-1193 is subject to Phosphotyrosine; by FYN.

The protein belongs to the immunoglobulin superfamily. In terms of assembly, interacts with CD2AP (via C-terminal domain). Interacts with MAGI1 (via PDZ 2 and 3 domains) forming a tripartite complex with IGSF5/JAM4. Interacts with DDN; the interaction is direct. Self-associates (via the Ig-like domains). Also interacts (via the Ig-like domains) with KIRREL1/NEPH1 and KIRREL2; the interaction with KIRREL1 is dependent on KIRREL1 glycosylation. Interacts with KIRREL3. Forms a complex with ACTN4, CASK, IQGAP1, MAGI2, SPTAN1 and SPTBN1. Interacts with NPHS2. Interacts with phosphatidylinositol 3-kinase regulatory subunit PIK3R1; the interaction is reduced by high glucose levels. Phosphorylated at Tyr-1193 by FYN, leading to the recruitment and activation of phospholipase C-gamma-1/PLCG1. Tyrosine phosphorylation is reduced by high glucose levels. Dephosphorylated by tensin TNS2 which leads to reduced binding of NPHN1 to PIK3R1. In terms of tissue distribution, specifically expressed in podocytes of kidney glomeruli.

It is found in the cell membrane. Functionally, seems to play a role in the development or function of the kidney glomerular filtration barrier. Regulates glomerular vascular permeability. May anchor the podocyte slit diaphragm to the actin cytoskeleton. Plays a role in skeletal muscle formation through regulation of myoblast fusion. The polypeptide is Nephrin (NPHS1) (Homo sapiens (Human)).